Here is a 414-residue protein sequence, read N- to C-terminus: Nucleoredoxin (414 aa).

Residues 131–305 (LLVKDDPEGL…ELNAVQLNEG (175 aa)) form the Thioredoxin domain.

This sequence belongs to the nucleoredoxin family.

The protein resides in the cytoplasm. It is found in the cytosol. Its subcellular location is the nucleus. The enzyme catalyses [protein]-dithiol + NAD(+) = [protein]-disulfide + NADH + H(+). The catalysed reaction is [protein]-dithiol + NADP(+) = [protein]-disulfide + NADPH + H(+). In terms of biological role, functions as a redox-dependent negative regulator of the Wnt signaling pathway. This is Nucleoredoxin (nxn) from Xenopus laevis (African clawed frog).